A 319-amino-acid polypeptide reads, in one-letter code: Zinc finger protein C19B12.07c (319 aa).

The segment at F146–H170 adopts a C2H2-type zinc-finger fold.

This sequence belongs to the ZNF277 family.

It localises to the nucleus. The polypeptide is Zinc finger protein C19B12.07c (Schizosaccharomyces pombe (strain 972 / ATCC 24843) (Fission yeast)).